The sequence spans 754 residues: Anaphase-promoting complex subunit cdh1 (754 aa).

Basic and acidic residues predominate over residues 1–10; the sequence is MFHSEYEKKL. 3 disordered regions span residues 1 to 30, 47 to 116, and 200 to 351; these read MFHS…YSNN, YEDN…TTTT, and IFNN…NNNN. 2 stretches are compositionally biased toward low complexity: residues 50–116 and 202–325; these read NGSN…TTTT and NNNN…ININ. Polar residues predominate over residues 326 to 339; that stretch reads QSPSKKQSLMSATM. Residues 340-351 are compositionally biased toward low complexity; sequence NNNNSNNNNNNN. 4 WD repeats span residues 411-448, 452-492, 495-532, and 537-576; these read KDDF…VSKL, ESGQ…KIRE, GHNT…NNYT, and GHRH…QPQQ. The interval 570–598 is disordered; that stretch reads MTQQPQQQHQPPPPPPSSNTSSISQQQQQ. Positions 587–598 are enriched in low complexity; sequence SNTSSISQQQQQ. 3 WD repeats span residues 610-652, 654-695, and 698-737; these read FHYA…SIQS, DTGS…PVTT, and GHTM…KESS.

Belongs to the WD repeat CDC20/Fizzy family. As to quaternary structure, the APC/C is composed of at least 13 subunits that stay tightly associated throughout the cell cycle: anapc1, anapc2, anapc3, anapc4, anapc5, anapc6, anapc7, anapc8, anapc10, anapc11, cdc20, cdc26 and cdh1.

The protein localises to the nucleus. It participates in protein modification; protein ubiquitination. Its function is as follows. Component of the anaphase promoting complex/cyclosome (APC/C), a cell cycle-regulated E3 ubiquitin-protein ligase complex that controls progression through mitosis and the G1 phase of the cell cycle. This chain is Anaphase-promoting complex subunit cdh1 (cdh1), found in Dictyostelium discoideum (Social amoeba).